A 747-amino-acid chain; its full sequence is Sex-specific storage-protein 1 (747 aa).

Positions 1–15 (MRVLVLLACLAAASA) are cleaved as a signal peptide. 2 N-linked (GlcNAc...) asparagine glycosylation sites follow: asparagine 494 and asparagine 706.

Belongs to the hemocyanin family. As to expression, fat body.

The protein localises to the secreted. Its subcellular location is the extracellular space. Larval storage protein (LSP) which may serve as a store of amino acids for synthesis of adult proteins. In Bombyx mori (Silk moth), this protein is Sex-specific storage-protein 1 (SP1).